A 248-amino-acid chain; its full sequence is Probable transcriptional regulatory protein Acid345_2125 (248 aa).

This sequence belongs to the TACO1 family.

It is found in the cytoplasm. The sequence is that of Probable transcriptional regulatory protein Acid345_2125 from Koribacter versatilis (strain Ellin345).